A 238-amino-acid chain; its full sequence is Uridylate kinase (238 aa).

12–15 (KLSG) lines the ATP pocket. Gly54 lines the UMP pocket. Gly55 and Arg59 together coordinate ATP. Residues Asp74 and 135–142 (TGNPFFTT) each bind UMP. Positions 162, 168, and 171 each coordinate ATP.

It belongs to the UMP kinase family. As to quaternary structure, homohexamer.

It is found in the cytoplasm. It catalyses the reaction UMP + ATP = UDP + ADP. It participates in pyrimidine metabolism; CTP biosynthesis via de novo pathway; UDP from UMP (UMPK route): step 1/1. Its activity is regulated as follows. Inhibited by UTP. In terms of biological role, catalyzes the reversible phosphorylation of UMP to UDP. The protein is Uridylate kinase of Bordetella avium (strain 197N).